The sequence spans 850 residues: Rho guanine nucleotide exchange factor 33 (850 aa).

Composition is skewed to basic and acidic residues over residues 1 to 13 (MEKSKAKQGENEH) and 98 to 113 (EEMQQKIEQLQQEKRR). Disordered regions lie at residues 1–21 (MEKSKAKQGENEHMPVNNPST) and 98–209 (EEMQ…DENL). A coiled-coil region spans residues 54–128 (LEEKVKSCRC…KAKKAQKEEH (75 aa)). A compositionally biased stretch (low complexity) spans 130 to 149 (AQAGPASAPAPGSAPTQGSP). A compositionally biased stretch (polar residues) spans 164 to 175 (DFTNMLPSQNYE). One can recognise a DH domain in the interval 273–448 (KRQTVALELL…RVFISHYTLL (176 aa)). 2 disordered regions span residues 504–550 (EMLQ…WELE) and 702–850 (AAQA…WGWW). Composition is skewed to low complexity over residues 510-520 (PSSSSSAPAVS) and 754-770 (APHGPAAAAAASRGAPR). Arginine 766 bears the Omega-N-methylarginine mark. A compositionally biased stretch (polar residues) spans 773–783 (FPQQRSQSEKQ). Residues 784–806 (TYLEEMHLEDATRFCPKEERESE) show a composition bias toward basic and acidic residues. A compositionally biased stretch (basic residues) spans 826-835 (SFRKLFKKKN).

The chain is Rho guanine nucleotide exchange factor 33 (Arhgef33) from Mus musculus (Mouse).